The primary structure comprises 376 residues: MGIKGLSKLLARYAPKSMKEGKIDQYSGRVIAIDASILVYQFISAVRDTTGATMVDEFGETTSHIIGTFYRTIKLIESGIKPIYVFDGKPPEMKDGELHKRKENAQKAQEQLDKALEEGDKEQAKKLMKRTARMTKEQSDEVKKLLQLMGIPCIEANCEAEGTCAALVKAGKCYATATEDMDALTLGSEHVVRKFSANDNKKDPIREYSLSSILEETGFTMEQFIDLCILLGCDYCETIKGVGPITAFELIQQYKSIENILQHLSDKYKVPENWKYKEARELFLHPDVADFSDYKLEWNKIDEEGIKKYLVTEKHFNEERVSKGIEKLKNVKSKKAQGRLDSFFNVKKVPLSKSEAASGVKRKKPTTKAKESRKKK.

The N-domain stretch occupies residues 1–105 (MGIKGLSKLL…GELHKRKENA (105 aa)). D34 contacts Mg(2+). Residues R47 and R71 each coordinate DNA. Positions 87, 159, 161, 180, and 182 each coordinate Mg(2+). The interval 123 to 254 (QAKKLMKRTA…ITAFELIQQY (132 aa)) is I-domain. E159 contacts DNA. 2 residues coordinate DNA: G232 and D234. Mg(2+) is bound at residue D234. The interval 336-344 (AQGRLDSFF) is interaction with PCNA. The segment at 354–376 (SEAASGVKRKKPTTKAKESRKKK) is disordered. Over residues 360–376 (VKRKKPTTKAKESRKKK) the composition is skewed to basic residues.

The protein belongs to the XPG/RAD2 endonuclease family. FEN1 subfamily. As to quaternary structure, interacts with PCNA. Three molecules of FEN1 bind to one PCNA trimer with each molecule binding to one PCNA monomer. PCNA stimulates the nuclease activity without altering cleavage specificity. Requires Mg(2+) as cofactor. In terms of processing, phosphorylated. Phosphorylation upon DNA damage induces relocalization to the nuclear plasma.

Its subcellular location is the nucleus. It is found in the nucleolus. The protein resides in the nucleoplasm. It localises to the mitochondrion. Structure-specific nuclease with 5'-flap endonuclease and 5'-3' exonuclease activities involved in DNA replication and repair. During DNA replication, cleaves the 5'-overhanging flap structure that is generated by displacement synthesis when DNA polymerase encounters the 5'-end of a downstream Okazaki fragment. It enters the flap from the 5'-end and then tracks to cleave the flap base, leaving a nick for ligation. Also involved in the long patch base excision repair (LP-BER) pathway, by cleaving within the apurinic/apyrimidinic (AP) site-terminated flap. Acts as a genome stabilization factor that prevents flaps from equilibrating into structures that lead to duplications and deletions. Also possesses 5'-3' exonuclease activity on nicked or gapped double-stranded DNA, and exhibits RNase H activity. Also involved in replication and repair of rDNA and in repairing mitochondrial DNA. The protein is Flap endonuclease 1 of Entamoeba histolytica (strain ATCC 30459 / HM-1:IMSS / ABRM).